A 299-amino-acid polypeptide reads, in one-letter code: Ribonuclease H2 subunit A (299 aa).

Met1 is subject to N-acetylmethionine. The 224-residue stretch at 28-251 (PCVLGVDEAG…AQSILESEAE (224 aa)) folds into the RNase H type-2 domain. Positions 34, 35, and 142 each coordinate a divalent metal cation. A phosphothreonine mark is found at Thr205 and Thr217. Residues 250 to 272 (AEDVKWEDSETGDPKGPGKIKSY) are disordered. Ser258 carries the phosphoserine modification.

The protein belongs to the RNase HII family. Eukaryotic subfamily. In terms of assembly, the RNase H2 complex is a heterotrimer composed of the catalytic subunit RNASEH2A and the non-catalytic subunits RNASEH2B and RNASEH2C. Mn(2+) serves as cofactor. It depends on Mg(2+) as a cofactor.

Its subcellular location is the nucleus. It carries out the reaction Endonucleolytic cleavage to 5'-phosphomonoester.. Functionally, catalytic subunit of RNase HII, an endonuclease that specifically degrades the RNA of RNA:DNA hybrids. Participates in DNA replication, possibly by mediating the removal of lagging-strand Okazaki fragment RNA primers during DNA replication. Mediates the excision of single ribonucleotides from DNA:RNA duplexes. The sequence is that of Ribonuclease H2 subunit A (RNASEH2A) from Bos taurus (Bovine).